The chain runs to 148 residues: Glutamate mutase sigma subunit 2 (148 aa).

Residues 1–134 (MRTVILGVIG…EALKADLGHR (134 aa)) form the B12-binding domain. Adenosylcob(III)alamin-binding positions include 11–15 (SDAHV), histidine 14, 59–61 (SSL), and 90–94 (NLAVG). A compositionally biased stretch (basic and acidic residues) spans 129 to 141 (ADLGHRSREEASS). Positions 129-148 (ADLGHRSREEASSEKVQLGS) are disordered.

It belongs to the methylaspartate mutase GlmS subunit family. As to quaternary structure, heterotetramer composed of 2 epsilon subunits (GlmE) and 2 sigma subunits (GlmS). GlmE exists as a homodimer and GlmS as a monomer. Requires adenosylcob(III)alamin as cofactor.

It catalyses the reaction (2S,3S)-3-methyl-L-aspartate = L-glutamate. Its pathway is amino-acid degradation; L-glutamate degradation via mesaconate pathway; acetate and pyruvate from L-glutamate: step 1/4. Its function is as follows. Catalyzes the carbon skeleton rearrangement of L-glutamate to L-threo-3-methylaspartate ((2S,3S)-3-methylaspartate). This chain is Glutamate mutase sigma subunit 2, found in Haloarcula marismortui (strain ATCC 43049 / DSM 3752 / JCM 8966 / VKM B-1809) (Halobacterium marismortui).